The chain runs to 349 residues: Ferredoxin--NADP reductase (349 aa).

Positions 43, 51, 56, 96, 131, 295, and 336 each coordinate FAD.

This sequence belongs to the ferredoxin--NADP reductase type 2 family. As to quaternary structure, homodimer. FAD serves as cofactor.

The enzyme catalyses 2 reduced [2Fe-2S]-[ferredoxin] + NADP(+) + H(+) = 2 oxidized [2Fe-2S]-[ferredoxin] + NADPH. The sequence is that of Ferredoxin--NADP reductase from Paraburkholderia phytofirmans (strain DSM 17436 / LMG 22146 / PsJN) (Burkholderia phytofirmans).